We begin with the raw amino-acid sequence, 207 residues long: Glutathione S-transferase 3 (207 aa).

The 78-residue stretch at 2–79 (VHYKLTYFNA…YLARKFGFVG (78 aa)) folds into the GST N-terminal domain. Residues Tyr-8, Lys-43, 49-51 (GQV), and 63-64 (QS) contribute to the glutathione site. Positions 81-207 (TAEEELQADE…WLAKRPETRF (127 aa)) constitute a GST C-terminal domain.

Belongs to the GST superfamily. Sigma family.

The catalysed reaction is RX + glutathione = an S-substituted glutathione + a halide anion + H(+). Its function is as follows. Conjugation of reduced glutathione to a wide number of exogenous and endogenous hydrophobic electrophiles. The sequence is that of Glutathione S-transferase 3 (gst-3) from Caenorhabditis elegans.